Consider the following 349-residue polypeptide: PhoH-like protein (349 aa).

147-154 is an ATP binding site; the sequence is GPAGTGKT.

It belongs to the PhoH family.

The protein resides in the cytoplasm. The protein is PhoH-like protein of Mycobacterium leprae (strain TN).